A 617-amino-acid polypeptide reads, in one-letter code: KIF-binding protein (617 aa).

The disordered stretch occupies residues 48-83; that stretch reads ALLGPAPEDEDEPAADDGPGDQALGAGEPREAEGPG. The span at 54-66 shows a compositional bias: acidic residues; it reads PEDEDEPAADDGP. Ser-174 bears the Phosphoserine mark.

The protein belongs to the KIF-binding protein family. Interacts with KIF1B; positively regulates KIF1B microtubule motor activity. Interacts with STMN2. In terms of tissue distribution, in the embryo it is expressed in cortical neurons; expression increases during neuronal development.

It is found in the cytoplasm. It localises to the cytoskeleton. Functionally, activator of KIF1B plus-end-directed microtubule motor activity. Required for organization of axonal microtubules, and axonal outgrowth and maintenance during peripheral and central nervous system development. The protein is KIF-binding protein of Mus musculus (Mouse).